We begin with the raw amino-acid sequence, 259 residues long: Isoprenyl transferase (259 aa).

The active site involves D30. D30 is a binding site for Mg(2+). Substrate-binding positions include 31–34 (GNGR), W35, R43, H47, and 75–77 (STE). N78 (proton acceptor) is an active-site residue. Substrate contacts are provided by residues W79, R81, R198, and 204-206 (RIS). Residue E217 coordinates Mg(2+).

The protein belongs to the UPP synthase family. Homodimer. Mg(2+) is required as a cofactor.

Its function is as follows. Catalyzes the condensation of isopentenyl diphosphate (IPP) with allylic pyrophosphates generating different type of terpenoids. The protein is Isoprenyl transferase of Caulobacter vibrioides (strain ATCC 19089 / CIP 103742 / CB 15) (Caulobacter crescentus).